The primary structure comprises 517 residues: Salicyloyl-CoA 5-hydroxylase (517 aa).

It belongs to the aromatic-ring hydroxylase family. KMO subfamily.

It carries out the reaction 2-hydroxybenzoyl-CoA + NADH + O2 + H(+) = 2,5-dihydroxybenzoyl-CoA + NAD(+) + H2O. In terms of biological role, involved in the degradation of salicylate via a pathway involving coenzyme A derivative. Catalyzes the aromatic hydroxylation of salicylyl-CoA to yield gentisyl-CoA. This chain is Salicyloyl-CoA 5-hydroxylase, found in Streptomyces sp.